Here is a 342-residue protein sequence, read N- to C-terminus: Holliday junction branch migration complex subunit RuvB (342 aa).

The segment at 1–179 (MTNILSPEKS…FGIPMRLNFY (179 aa)) is large ATPase domain (RuvB-L). ATP is bound by residues I18, R19, G60, K63, T64, T65, 126–128 (EDF), R169, Y179, and R216. T64 is a Mg(2+) binding site. Positions 180 to 250 (NTEELKKVLN…VSDFGLNRLE (71 aa)) are small ATPAse domain (RuvB-S). The head domain (RuvB-H) stretch occupies residues 253–342 (RIGLDSNDYR…HQFNIFNENE (90 aa)). DNA is bound by residues R289, R308, and R313.

The protein belongs to the RuvB family. In terms of assembly, homohexamer. Forms an RuvA(8)-RuvB(12)-Holliday junction (HJ) complex. HJ DNA is sandwiched between 2 RuvA tetramers; dsDNA enters through RuvA and exits via RuvB. An RuvB hexamer assembles on each DNA strand where it exits the tetramer. Each RuvB hexamer is contacted by two RuvA subunits (via domain III) on 2 adjacent RuvB subunits; this complex drives branch migration. In the full resolvosome a probable DNA-RuvA(4)-RuvB(12)-RuvC(2) complex forms which resolves the HJ.

The protein resides in the cytoplasm. The enzyme catalyses ATP + H2O = ADP + phosphate + H(+). The RuvA-RuvB-RuvC complex processes Holliday junction (HJ) DNA during genetic recombination and DNA repair, while the RuvA-RuvB complex plays an important role in the rescue of blocked DNA replication forks via replication fork reversal (RFR). RuvA specifically binds to HJ cruciform DNA, conferring on it an open structure. The RuvB hexamer acts as an ATP-dependent pump, pulling dsDNA into and through the RuvAB complex. RuvB forms 2 homohexamers on either side of HJ DNA bound by 1 or 2 RuvA tetramers; 4 subunits per hexamer contact DNA at a time. Coordinated motions by a converter formed by DNA-disengaged RuvB subunits stimulates ATP hydrolysis and nucleotide exchange. Immobilization of the converter enables RuvB to convert the ATP-contained energy into a lever motion, pulling 2 nucleotides of DNA out of the RuvA tetramer per ATP hydrolyzed, thus driving DNA branch migration. The RuvB motors rotate together with the DNA substrate, which together with the progressing nucleotide cycle form the mechanistic basis for DNA recombination by continuous HJ branch migration. Branch migration allows RuvC to scan DNA until it finds its consensus sequence, where it cleaves and resolves cruciform DNA. The polypeptide is Holliday junction branch migration complex subunit RuvB (Rickettsia rickettsii (strain Sheila Smith)).